Consider the following 134-residue polypeptide: Complexin-2 (134 aa).

The segment at 1–114 (MDFVMKQALG…CGDEDEEDEE (114 aa)) is disordered. Residues 15 to 85 (DMGKMLGGDE…EEKEAEEKAA (71 aa)) show a composition bias toward basic and acidic residues. The stretch at 29 to 84 (DAQKKEEERQEALRQQEDERKQKHIRMETEREKVRQQIRDKYGLKKKEEKEAEEKA) forms a coiled coil.

Belongs to the complexin/synaphin family. In terms of assembly, binds to the SNARE core complex containing SNAP25, VAMP2 and STX1A. As to expression, nervous system. Present in electric organ (at protein level).

Its subcellular location is the cytoplasm. The protein resides in the cytosol. It is found in the presynapse. It localises to the nucleus. The protein localises to the perikaryon. Functionally, positively regulates a late step in synaptic vesicle exocytosis. The polypeptide is Complexin-2 (Narke japonica (Japanese sleeper ray)).